Here is a 526-residue protein sequence, read N- to C-terminus: Vang-like protein 1 (526 aa).

A compositionally biased stretch (low complexity) spans 1–15 (MDTESTYSGYSYYSS). A disordered region spans residues 1–87 (MDTESTYSGY…TTAITGTSEH (87 aa)). At 1–114 (MDTESTYSGY…VGLDCKRYLG (114 aa)) the chain is on the cytoplasmic side. Polar residues predominate over residues 75–87 (GETTTAITGTSEH). Ser88 and Ser90 each carry phosphoserine. A helical transmembrane segment spans residues 115 to 135 (LTVASFLGLLVFLTPIAFILL). The Extracellular portion of the chain corresponds to 136–153 (PQILWREELKPCGAICEG). A helical transmembrane segment spans residues 154–174 (LLISVSFKLLILLIGTWALFF). The Cytoplasmic segment spans residues 175 to 184 (RKQRADVPRV). The helical transmembrane segment at 185-205 (FVFRALLLVLIFLFVVSYWLF) threads the bilayer. Residues 206-224 (YGVRILDSRDQNYKDIVQY) are Extracellular-facing. Residues 225-245 (AVSLVDALLFIHYLAIVLLEL) form a helical membrane-spanning segment. The Cytoplasmic portion of the chain corresponds to 246–526 (RQLQPMFTLQ…VLRLQSETSV (281 aa)).

This sequence belongs to the Vang family. In terms of assembly, heterodimer with Vangl2. Interacts through its C-terminal region with the N-terminal half of DVL1, DVL2 and DVL3. The PDZ domain of DVL1, DVL2 and DVL3 is required for the interaction.

The protein localises to the cell membrane. This is Vang-like protein 1 (Vangl1) from Mus musculus (Mouse).